We begin with the raw amino-acid sequence, 318 residues long: MFMINLLLTIVPILLAVAFLTLVERKVLGYMQLRKGPNVVGPYGLLQPIADAVKLFTKEPLRPLTSSITMFIIAPILALTLALTMWTPLPMPHPLINMNLGVLFMLAMSSLAVYSILWSGWASNSKYALIGALRAVAQTISYEVTLAIILLSVLLLSGSFALPALITTQEHMWLIIPSWPLAMMWFISTLAETNRAPFDLTEGESELVSGFNVEYAGGPFALFFLAEYANIIMMNIFTTILFLGAFHNPLMPELYTINFALKATLLTISFLWVRASYPRFRYDQLMHLLWKNFLPLTLALCMWHVTMPIITAGIPPQT.

The next 8 helical transmembrane spans lie at 2–22, 68–88, 100–120, 146–166, 171–191, 222–242, 253–273, and 294–314; these read FMINLLLTIVPILLAVAFLTL, ITMFIIAPILALTLALTMWTP, LGVLFMLAMSSLAVYSILWSG, LAIILLSVLLLSGSFALPALI, HMWLIIPSWPLAMMWFISTLA, LFFLAEYANIIMMNIFTTILF, ELYTINFALKATLLTISFLWV, and LPLTLALCMWHVTMPIITAGI.

This sequence belongs to the complex I subunit 1 family.

It is found in the mitochondrion inner membrane. The catalysed reaction is a ubiquinone + NADH + 5 H(+)(in) = a ubiquinol + NAD(+) + 4 H(+)(out). Its function is as follows. Core subunit of the mitochondrial membrane respiratory chain NADH dehydrogenase (Complex I) that is believed to belong to the minimal assembly required for catalysis. Complex I functions in the transfer of electrons from NADH to the respiratory chain. The immediate electron acceptor for the enzyme is believed to be ubiquinone. The sequence is that of NADH-ubiquinone oxidoreductase chain 1 (MT-ND1) from Coelops frithii (East Asian tailless leaf-nosed bat).